The sequence spans 334 residues: Glycerol-3-phosphate dehydrogenase [NAD(P)+] 2 (334 aa).

Residues Trp-16, Arg-36, Arg-37, and Lys-110 each coordinate NADPH. Lys-110 and Gly-140 together coordinate sn-glycerol 3-phosphate. Ala-144 serves as a coordination point for NADPH. Sn-glycerol 3-phosphate is bound by residues Lys-195, Asp-248, Ser-258, Arg-259, and Asn-260. Catalysis depends on Lys-195, which acts as the Proton acceptor. Position 259 (Arg-259) interacts with NADPH. NADPH-binding residues include Val-282 and Glu-284.

Belongs to the NAD-dependent glycerol-3-phosphate dehydrogenase family.

It localises to the cytoplasm. The enzyme catalyses sn-glycerol 3-phosphate + NAD(+) = dihydroxyacetone phosphate + NADH + H(+). It catalyses the reaction sn-glycerol 3-phosphate + NADP(+) = dihydroxyacetone phosphate + NADPH + H(+). Its pathway is membrane lipid metabolism; glycerophospholipid metabolism. Functionally, catalyzes the reduction of the glycolytic intermediate dihydroxyacetone phosphate (DHAP) to sn-glycerol 3-phosphate (G3P), the key precursor for phospholipid synthesis. The polypeptide is Glycerol-3-phosphate dehydrogenase [NAD(P)+] 2 (Mycobacterium tuberculosis (strain ATCC 25618 / H37Rv)).